An 83-amino-acid polypeptide reads, in one-letter code: U-actitoxin-Avd8d (83 aa).

The first 19 residues, 1-19 (MASTRLFVLLVIGTVLLCQ), serve as a signal peptide directing secretion. The propeptide occupies 20 to 38 (VSGFLDELLAEHELPQDMT).

The protein belongs to the sea anemone 8 toxin family.

It is found in the secreted. It localises to the nematocyst. The chain is U-actitoxin-Avd8d from Anemonia viridis (Snakelocks anemone).